The following is a 530-amino-acid chain: MGDDSLYLGGEWQFNHFSKLTSSRPDAAFAEIQRTSLPEKSPLSSETRVDLCDDLAPVARQLAPREKLPLSSRRPAAVGAGLQNMGNTCYENASLQCLTYTLPLANYMLSREHSQTCQRPKCCMLCTMQAHITWALHSPGHVIQPSQALAAGFHRGKQEDVHEFLMFTVDAMKKACLPGHKQVDHHSKDTTLIHQIFGGCWRSQIKCLHCHGISDTFDPYLDIALDIQAAQSVKQALEQLVKPEELNGENAYHCGLCLQRAPASNTLTLHTSAKVLILVLKRFSDVAGNKLAKNVQYPECLDMQPYMSQQNTGPLVYVLYAVLVHAGWSCHDGYYFSYVKAQEGQWYKMDDAEVTVCSITSVLSQQAYVLFYIQKSEWERHSESVSRGREPRALGAEDTDRPATQGELKRDHPCLQVPELDEHLVERATEESTLDHWKFPQEQNKMKPEFNVRKVEGTLPPNVLVIHQSKYKCGMKNHHPEQQSSLLNLSSMNSTDQESMNTGTLASLQGRTRRSKGKNKHSKRSLLVCQ.

The USP domain occupies 80–375 (AGLQNMGNTC…QAYVLFYIQK (296 aa)). The segment covering 382–392 (SESVSRGREPR) has biased composition (basic and acidic residues). Disordered stretches follow at residues 382–410 (SESV…ELKR) and 493–530 (NSTD…LVCQ). Polar residues predominate over residues 495–510 (TDQESMNTGTLASLQG). Residues 511–524 (RTRRSKGKNKHSKR) show a composition bias toward basic residues.

It belongs to the peptidase C19 family. USP17 subfamily.

Its subcellular location is the nucleus. It localises to the endoplasmic reticulum. In Homo sapiens (Human), this protein is Inactive ubiquitin carboxyl-terminal hydrolase 17-like protein 4 (USP17L4).